The following is a 181-amino-acid chain: ATP synthase subunit delta (181 aa).

This sequence belongs to the ATPase delta chain family. In terms of assembly, F-type ATPases have 2 components, F(1) - the catalytic core - and F(0) - the membrane proton channel. F(1) has five subunits: alpha(3), beta(3), gamma(1), delta(1), epsilon(1). F(0) has three main subunits: a(1), b(2) and c(10-14). The alpha and beta chains form an alternating ring which encloses part of the gamma chain. F(1) is attached to F(0) by a central stalk formed by the gamma and epsilon chains, while a peripheral stalk is formed by the delta and b chains.

The protein resides in the cell membrane. F(1)F(0) ATP synthase produces ATP from ADP in the presence of a proton or sodium gradient. F-type ATPases consist of two structural domains, F(1) containing the extramembraneous catalytic core and F(0) containing the membrane proton channel, linked together by a central stalk and a peripheral stalk. During catalysis, ATP synthesis in the catalytic domain of F(1) is coupled via a rotary mechanism of the central stalk subunits to proton translocation. Functionally, this protein is part of the stalk that links CF(0) to CF(1). It either transmits conformational changes from CF(0) to CF(1) or is implicated in proton conduction. The polypeptide is ATP synthase subunit delta (Desulforamulus reducens (strain ATCC BAA-1160 / DSM 100696 / MI-1) (Desulfotomaculum reducens)).